The primary structure comprises 371 residues: Carlactonoate CLA methyltransferase (371 aa).

Y21 provides a ligand contact to S-adenosyl-L-homocysteine. Q28 provides a ligand contact to (11R)-carlactonoate. C62, N67, D101, L102, S141, and F142 together coordinate S-adenosyl-L-homocysteine. 2 residues coordinate (11R)-carlactonoate: H162 and W163. N180, D266, Y268, and D269 together coordinate Mg(2+).

This sequence belongs to the methyltransferase superfamily. Type-7 methyltransferase family. SABATH subfamily. As to quaternary structure, homodimer. The cofactor is Mg(2+).

The catalysed reaction is (11R)-carlactonoate + S-adenosyl-L-methionine = (11R)-methyl carlactonoate + S-adenosyl-L-homocysteine. Functionally, methyltransferase involved in the biosynthesis of strigolactone natural products, bioactive compounds promoting plant fitness and soil microbe interactions, but preventing shoot branching. Catalyzes the biosynthesis of (11R)-methyl carlactonoate (MeCLA) from (11R)-carlactonoate (CLA), downstream of MAX1; MeCLA is probably biologically active as a hormone regulating shoot branching and serves as a precursor of non-canonical strigolactones (SLs). The sequence is that of Carlactonoate CLA methyltransferase from Arabidopsis thaliana (Mouse-ear cress).